A 490-amino-acid chain; its full sequence is MKNKNSGYDLVIFGAKGDLSCRKLLPSLYQLEKKNKLCTHTRIIGVGRANWDKIIYTNVVYKSLIKFLNETIIESIWKKFSSRLEFCNLDINCLHNFKKLKQIIQQNNNIIINYLAMPPHTFGNICLGLESINLNLEPTRIIIEKPLGSSLKTSININNKIGKFFKEKQIFRIDHYLGKETIQNLLAFRFSNSLFYYNWNNKFIDHVQITVSETIGVEGRFNYFDTVGQIKDMVQNHLLQILTITTMSTPIDCHENSIRDEKVKILKSLRPFNINNIHKNVILGQYTSGIINQKKVKSYLDETNNQEYQMNKYTETFVSMKIYIDNDQWSGVPFYLRTGKRLPKKCSEIVIFFKTPPLNIFSKNYNTLSKNKLILSLQPNEAIKIYILNKKPKLTSQYKLDLITLDFNYSKFYKKIQLSDAYEKLLLESMKGIQSLFVRRDEVELAWKWIDSTLQCLHLKPRLPDLYPAGTWGPARSKTMINNDGYEWNE.

Residues R48, D90–I91, and K145 contribute to the NADP(+) site. 4 residues coordinate substrate: H175, K179, E213, and D232. H237 (proton acceptor) is an active-site residue. The substrate site is built by K340 and K345.

It belongs to the glucose-6-phosphate dehydrogenase family.

It carries out the reaction D-glucose 6-phosphate + NADP(+) = 6-phospho-D-glucono-1,5-lactone + NADPH + H(+). It functions in the pathway carbohydrate degradation; pentose phosphate pathway; D-ribulose 5-phosphate from D-glucose 6-phosphate (oxidative stage): step 1/3. In terms of biological role, catalyzes the oxidation of glucose 6-phosphate to 6-phosphogluconolactone. The protein is Glucose-6-phosphate 1-dehydrogenase of Buchnera aphidicola subsp. Baizongia pistaciae (strain Bp).